Consider the following 347-residue polypeptide: NADH-ubiquinone oxidoreductase chain 2 (347 aa).

10 helical membrane-spanning segments follow: residues 1-21 (MNPL…LIVM), 25-45 (HWFM…PLLT), 67-87 (SMLL…WSIM), 111-131 (FHFW…LILL), 144-164 (MIMP…SIAI), 178-198 (IMAY…AYNP), 201-221 (TLLN…LLMI), 237-257 (LPLI…LPPL), 274-294 (SSII…YFYT), and 326-346 (LPLM…MPIL).

It belongs to the complex I subunit 2 family. Core subunit of respiratory chain NADH dehydrogenase (Complex I) which is composed of 45 different subunits. Interacts with TMEM242.

It localises to the mitochondrion inner membrane. It carries out the reaction a ubiquinone + NADH + 5 H(+)(in) = a ubiquinol + NAD(+) + 4 H(+)(out). Core subunit of the mitochondrial membrane respiratory chain NADH dehydrogenase (Complex I) which catalyzes electron transfer from NADH through the respiratory chain, using ubiquinone as an electron acceptor. Essential for the catalytic activity and assembly of complex I. In Myotis simus (Velvety myotis), this protein is NADH-ubiquinone oxidoreductase chain 2.